Consider the following 289-residue polypeptide: Mas-related G-protein coupled receptor member G (289 aa).

Topologically, residues 1-13 (MFGLFGLWRTFDS) are extracellular. Residues 14 to 34 (VVFYLTLIVGLGGPVGNGLVL) form a helical membrane-spanning segment. At 35 to 42 (WNLGFRIK) the chain is on the cytoplasmic side. Residues 43 to 63 (KGPFSIYLLHLAAADFLFLSC) traverse the membrane as a helical segment. The Extracellular segment spans residues 64-78 (RVGFSVAQAALGAQD). The chain crosses the membrane as a helical span at residues 79–99 (TLYFVLTFLWFAVGLWLLAAF). At 100–120 (SVERCLSDLFPACYQGCRPRH) the chain is on the cytoplasmic side. A helical membrane pass occupies residues 121 to 141 (ASAVLCALVWTPTLPAVPLPA). The Extracellular portion of the chain corresponds to 142–163 (NACGLLRNSACPLVCPRYHVAS). The chain crosses the membrane as a helical span at residues 164–184 (VTWFLVLARVAWTAGVVLFVW). The Cytoplasmic segment spans residues 185 to 195 (VTCCSTRPRPR). The chain crosses the membrane as a helical span at residues 196-216 (LYGIVLGALLLLFFCGLPSVF). Residues 217–221 (YWSLQ) are Extracellular-facing. A helical membrane pass occupies residues 222 to 242 (PLLNFLLPVFSPLATLLACVN). Residues 243–289 (SSSKPLIYSGLGRQPGKREPLRSVLRRALGEGAELGARGQSLPMGLL) are Cytoplasmic-facing.

This sequence belongs to the G-protein coupled receptor 1 family. Mas subfamily.

It is found in the cell membrane. Functionally, orphan receptor. May regulate nociceptor function and/or development, including the sensation or modulation of pain. This chain is Mas-related G-protein coupled receptor member G (MRGPRG), found in Homo sapiens (Human).